Consider the following 56-residue polypeptide: Bdellin B-3 (56 aa).

The Kazal-like domain occupies 1–42 (DTECVCTKELHRVCGSDGVTYDNECLATCHGASVAHDHACEG). 3 disulfides stabilise this stretch: C4-C29, C6-C25, and C14-C40.

Proteinase inhibitor. Blocks the activity of trypsin, plasmin and sperm acrosin. The chain is Bdellin B-3 from Hirudo medicinalis (Medicinal leech).